We begin with the raw amino-acid sequence, 330 residues long: ADP-L-glycero-D-manno-heptose-6-epimerase (330 aa).

NADP(+)-binding positions include 11–12 (FI), 32–33 (DN), K39, K54, 75–79 (EGACS), and N92. The active-site Proton acceptor is Y139. Position 143 (K143) interacts with NADP(+). N168 is a substrate binding site. Residues V169 and K177 each coordinate NADP(+). K177 functions as the Proton acceptor in the catalytic mechanism. Substrate-binding positions include R179, H186, 200–203 (FGEY), R213, and Y292.

This sequence belongs to the NAD(P)-dependent epimerase/dehydratase family. HldD subfamily. In terms of assembly, homopentamer. The cofactor is NADP(+).

The enzyme catalyses ADP-D-glycero-beta-D-manno-heptose = ADP-L-glycero-beta-D-manno-heptose. Its pathway is nucleotide-sugar biosynthesis; ADP-L-glycero-beta-D-manno-heptose biosynthesis; ADP-L-glycero-beta-D-manno-heptose from D-glycero-beta-D-manno-heptose 7-phosphate: step 4/4. In terms of biological role, catalyzes the interconversion between ADP-D-glycero-beta-D-manno-heptose and ADP-L-glycero-beta-D-manno-heptose via an epimerization at carbon 6 of the heptose. The polypeptide is ADP-L-glycero-D-manno-heptose-6-epimerase (Burkholderia multivorans (strain ATCC 17616 / 249)).